Reading from the N-terminus, the 121-residue chain is Large ribosomal subunit protein bL12 (121 aa).

This sequence belongs to the bacterial ribosomal protein bL12 family. Homodimer. Part of the ribosomal stalk of the 50S ribosomal subunit. Forms a multimeric L10(L12)X complex, where L10 forms an elongated spine to which 2 to 4 L12 dimers bind in a sequential fashion. Binds GTP-bound translation factors.

Functionally, forms part of the ribosomal stalk which helps the ribosome interact with GTP-bound translation factors. Is thus essential for accurate translation. The polypeptide is Large ribosomal subunit protein bL12 (Shewanella baltica (strain OS223)).